The primary structure comprises 543 residues: Carboxypeptidase Y homolog A (543 aa).

Positions 1–17 (MKVATSALLVGAVSASV) are cleaved as a signal peptide. Positions 18-128 (GPQQQVLKFP…KLENYSMRTK (111 aa)) are excised as a propeptide. 2 N-linked (GlcNAc...) asparagine glycosylation sites follow: Asn-122 and Asn-213. Cystine bridges form between Cys-182-Cys-421, Cys-316-Cys-330, Cys-340-Cys-363, Cys-347-Cys-356, and Cys-385-Cys-391. The active site involves Ser-269. The active site involves Asp-460. The N-linked (GlcNAc...) asparagine glycan is linked to Asn-508. His-519 is an active-site residue.

It belongs to the peptidase S10 family.

The protein resides in the vacuole. It carries out the reaction Release of a C-terminal amino acid with broad specificity.. Its function is as follows. Vacuolar carboxypeptidase involved in degradation of small peptides. Digests preferentially peptides containing an aliphatic or hydrophobic residue in P1' position, as well as methionine, leucine or phenylalanine in P1 position of ester substrate. In Leptosphaeria maculans (strain JN3 / isolate v23.1.3 / race Av1-4-5-6-7-8) (Blackleg fungus), this protein is Carboxypeptidase Y homolog A (CPYA).